We begin with the raw amino-acid sequence, 359 residues long: Alanine racemase (359 aa).

Catalysis depends on lysine 34, which acts as the Proton acceptor; specific for D-alanine. The residue at position 34 (lysine 34) is an N6-(pyridoxal phosphate)lysine. Arginine 129 serves as a coordination point for substrate. Tyrosine 255 (proton acceptor; specific for L-alanine) is an active-site residue. Methionine 303 lines the substrate pocket.

This sequence belongs to the alanine racemase family. Requires pyridoxal 5'-phosphate as cofactor.

The enzyme catalyses L-alanine = D-alanine. Its pathway is amino-acid biosynthesis; D-alanine biosynthesis; D-alanine from L-alanine: step 1/1. Catalyzes the interconversion of L-alanine and D-alanine. May also act on other amino acids. The chain is Alanine racemase (alr) from Shigella dysenteriae serotype 1 (strain Sd197).